Here is a 303-residue protein sequence, read N- to C-terminus: Phosphatidylglycerol--prolipoprotein diacylglyceryl transferase (303 aa).

The next 3 helical transmembrane spans lie at 18-38 (VGFF…LIGL), 58-78 (LLPI…VIFE), and 107-127 (WQGG…ILIF). Arg154 provides a ligand contact to a 1,2-diacyl-sn-glycero-3-phospho-(1'-sn-glycerol). The next 2 membrane-spanning stretches (helical) occupy residues 193 to 213 (PTFL…ISLI) and 266 to 286 (IAQL…FWIY).

It belongs to the Lgt family.

It localises to the cell inner membrane. It catalyses the reaction L-cysteinyl-[prolipoprotein] + a 1,2-diacyl-sn-glycero-3-phospho-(1'-sn-glycerol) = an S-1,2-diacyl-sn-glyceryl-L-cysteinyl-[prolipoprotein] + sn-glycerol 1-phosphate + H(+). The protein operates within protein modification; lipoprotein biosynthesis (diacylglyceryl transfer). Its function is as follows. Catalyzes the transfer of the diacylglyceryl group from phosphatidylglycerol to the sulfhydryl group of the N-terminal cysteine of a prolipoprotein, the first step in the formation of mature lipoproteins. This Prochlorococcus marinus (strain MIT 9211) protein is Phosphatidylglycerol--prolipoprotein diacylglyceryl transferase.